Reading from the N-terminus, the 580-residue chain is CRISPR-associated exonuclease Cas4/endonuclease Cas1 fusion (580 aa).

A CRISPR-associated exonuclease Cas4 region spans residues 1–223 (MAPSDTPPSA…RCSLLPICLP (223 aa)). Cysteine 44 provides a ligand contact to [4Fe-4S] cluster. Mn(2+)-binding residues include aspartate 112 and glutamate 125. Positions 212, 215, and 221 each coordinate [4Fe-4S] cluster. Residues 248 to 580 (LYGQTPGARI…IPRYPHYCPR (333 aa)) are CRISPR-associated endonuclease Cas1. Mn(2+) is bound by residues glutamate 401, histidine 472, and glutamate 487.

It in the N-terminal section; belongs to the CRISPR-associated exonuclease Cas4 family. In the C-terminal section; belongs to the CRISPR-associated endonuclease Cas1 family. Homodimer, forms a heterotetramer with a Cas2 homodimer. Requires [4Fe-4S] cluster as cofactor. The cofactor is Mg(2+). It depends on Mn(2+) as a cofactor.

The catalysed reaction is exonucleolytic cleavage in the 5'- to 3'-direction to yield nucleoside 3'-phosphates.. CRISPR (clustered regularly interspaced short palindromic repeat), is an adaptive immune system that provides protection against mobile genetic elements (viruses, transposable elements and conjugative plasmids). CRISPR clusters contain spacers, sequences complementary to antecedent mobile elements, and target invading nucleic acids. CRISPR clusters are transcribed and processed into CRISPR RNA (crRNA). The Cas4 region acts as a ssDNA exonuclease, while the Cas1 region acts as a dsDNA endonuclease. Involved in the integration of spacer DNA into the CRISPR cassette. This chain is CRISPR-associated exonuclease Cas4/endonuclease Cas1 fusion (cas4-cas1), found in Rhodospirillum rubrum (strain ATCC 11170 / ATH 1.1.1 / DSM 467 / LMG 4362 / NCIMB 8255 / S1).